The following is a 427-amino-acid chain: Glutamate-1-semialdehyde 2,1-aminomutase (427 aa).

Lys265 carries the N6-(pyridoxal phosphate)lysine modification.

Belongs to the class-III pyridoxal-phosphate-dependent aminotransferase family. HemL subfamily. In terms of assembly, homodimer. It depends on pyridoxal 5'-phosphate as a cofactor.

Its subcellular location is the cytoplasm. The catalysed reaction is (S)-4-amino-5-oxopentanoate = 5-aminolevulinate. It participates in porphyrin-containing compound metabolism; protoporphyrin-IX biosynthesis; 5-aminolevulinate from L-glutamyl-tRNA(Glu): step 2/2. The protein is Glutamate-1-semialdehyde 2,1-aminomutase of Pasteurella multocida (strain Pm70).